Consider the following 91-residue polypeptide: Large ribosomal subunit protein eL37 (91 aa).

4 residues coordinate Zn(2+): cysteine 19, cysteine 22, cysteine 34, and cysteine 37. The C4-type zinc finger occupies cysteine 19 to cysteine 37.

It belongs to the eukaryotic ribosomal protein eL37 family. The cofactor is Zn(2+).

Binds to the 23S rRNA. This Dictyostelium discoideum (Social amoeba) protein is Large ribosomal subunit protein eL37 (rpl37).